An 89-amino-acid chain; its full sequence is Prostaglandin E2 receptor EP3 subtype (89 aa).

Residues 1–18 traverse the membrane as a helical segment; it reads GVWLAVLAFALLPVLGVG. Residues 19–48 lie on the Extracellular side of the membrane; the sequence is QYTIQWPGTWCFISTGPGGNGTNSRQNWGN. N-linked (GlcNAc...) asparagine glycosylation occurs at N38. A helical transmembrane segment spans residues 49–74; that stretch reads VFFASDFAILGLSALVVTFACNLATI. Topologically, residues 75–89 are cytoplasmic; it reads KALVSRCRAKATASQ.

Belongs to the G-protein coupled receptor 1 family. As to quaternary structure, interacts (via C-terminus) with MKLN1.

Its subcellular location is the cell membrane. Functionally, receptor for prostaglandin E2 (PGE2). Required for normal development of fever in response to pyrinogens, including IL1B, prostaglandin E2 and bacterial lipopolysaccharide (LPS). Required for normal potentiation of platelet aggregation by prostaglandin E2, and thus plays a role in the regulation of blood coagulation. Required for increased HCO3(-) secretion in the duodenum in response to mucosal acidification, and thereby contributes to the protection of the mucosa against acid-induced ulceration. Not required for normal kidney function, normal urine volume and osmolality. The sequence is that of Prostaglandin E2 receptor EP3 subtype (PTGER3) from Ovis aries (Sheep).